We begin with the raw amino-acid sequence, 226 residues long: Uridylate kinase (226 aa).

Residue 6 to 10 (KISGK) participates in ATP binding. A UMP-binding site is contributed by G43. Residues G44 and R48 each contribute to the ATP site. UMP contacts are provided by residues D65 and 113–119 (FQPGQST). Residues T139, N140, Y145, and D148 each coordinate ATP.

Belongs to the UMP kinase family. Homohexamer.

Its subcellular location is the cytoplasm. The enzyme catalyses UMP + ATP = UDP + ADP. It functions in the pathway pyrimidine metabolism; CTP biosynthesis via de novo pathway; UDP from UMP (UMPK route): step 1/1. Its activity is regulated as follows. Inhibited by UTP. Catalyzes the reversible phosphorylation of UMP to UDP. This chain is Uridylate kinase, found in Sulfurisphaera tokodaii (strain DSM 16993 / JCM 10545 / NBRC 100140 / 7) (Sulfolobus tokodaii).